The primary structure comprises 224 residues: Octanoyltransferase (224 aa).

Residues 29–224 (EATPDALWIC…GQKLATYLAP (196 aa)) form the BPL/LPL catalytic domain. Residues 68-75 (RGGQVTFH), 157-159 (ALG), and 170-172 (GVA) each bind substrate. Cysteine 188 functions as the Acyl-thioester intermediate in the catalytic mechanism.

This sequence belongs to the LipB family.

The protein resides in the cytoplasm. It catalyses the reaction octanoyl-[ACP] + L-lysyl-[protein] = N(6)-octanoyl-L-lysyl-[protein] + holo-[ACP] + H(+). It participates in protein modification; protein lipoylation via endogenous pathway; protein N(6)-(lipoyl)lysine from octanoyl-[acyl-carrier-protein]: step 1/2. Catalyzes the transfer of endogenously produced octanoic acid from octanoyl-acyl-carrier-protein onto the lipoyl domains of lipoate-dependent enzymes. Lipoyl-ACP can also act as a substrate although octanoyl-ACP is likely to be the physiological substrate. The protein is Octanoyltransferase of Polaromonas naphthalenivorans (strain CJ2).